A 305-amino-acid chain; its full sequence is GTPase Era (305 aa).

The 169-residue stretch at 13–181 (RCGYVAIVGR…EKLVAERLPE (169 aa)) folds into the Era-type G domain. The interval 21 to 28 (GRPNVGKS) is G1. 21-28 (GRPNVGKS) provides a ligand contact to GTP. The segment at 47–51 (QTTRH) is G2. Positions 68-71 (DTPG) are G3. Residues 68-72 (DTPGL) and 130-133 (NKTD) contribute to the GTP site. A G4 region spans residues 130–133 (NKTD). The G5 stretch occupies residues 160 to 162 (ISA). The KH type-2 domain occupies 204–288 (VREKIMRQLG…MLNLWVKVKG (85 aa)).

The protein belongs to the TRAFAC class TrmE-Era-EngA-EngB-Septin-like GTPase superfamily. Era GTPase family. Monomer.

The protein resides in the cytoplasm. The protein localises to the cell inner membrane. Its function is as follows. An essential GTPase that binds both GDP and GTP, with rapid nucleotide exchange. Plays a role in 16S rRNA processing and 30S ribosomal subunit biogenesis and possibly also in cell cycle regulation and energy metabolism. The chain is GTPase Era from Pseudomonas aeruginosa (strain LESB58).